The following is a 143-amino-acid chain: Large ribosomal subunit protein uL13 (143 aa).

It belongs to the universal ribosomal protein uL13 family. In terms of assembly, part of the 50S ribosomal subunit.

Functionally, this protein is one of the early assembly proteins of the 50S ribosomal subunit, although it is not seen to bind rRNA by itself. It is important during the early stages of 50S assembly. This Caldanaerobacter subterraneus subsp. tengcongensis (strain DSM 15242 / JCM 11007 / NBRC 100824 / MB4) (Thermoanaerobacter tengcongensis) protein is Large ribosomal subunit protein uL13.